The following is a 945-amino-acid chain: Isoleucine--tRNA ligase (945 aa).

The 'HIGH' region motif lies at 66-76; that stretch reads PYANGDIHLGH. An L-isoleucyl-5'-AMP-binding site is contributed by Glu581. A 'KMSKS' region motif is present at residues 622–626; it reads KMSKS. Residue Lys625 participates in ATP binding. Cys908, Cys911, Cys928, and Cys931 together coordinate Zn(2+).

The protein belongs to the class-I aminoacyl-tRNA synthetase family. IleS type 1 subfamily. Monomer. Zn(2+) is required as a cofactor.

It localises to the cytoplasm. The catalysed reaction is tRNA(Ile) + L-isoleucine + ATP = L-isoleucyl-tRNA(Ile) + AMP + diphosphate. Functionally, catalyzes the attachment of isoleucine to tRNA(Ile). As IleRS can inadvertently accommodate and process structurally similar amino acids such as valine, to avoid such errors it has two additional distinct tRNA(Ile)-dependent editing activities. One activity is designated as 'pretransfer' editing and involves the hydrolysis of activated Val-AMP. The other activity is designated 'posttransfer' editing and involves deacylation of mischarged Val-tRNA(Ile). This Burkholderia ambifaria (strain ATCC BAA-244 / DSM 16087 / CCUG 44356 / LMG 19182 / AMMD) (Burkholderia cepacia (strain AMMD)) protein is Isoleucine--tRNA ligase.